We begin with the raw amino-acid sequence, 246 residues long: DNA repair protein RecO (246 aa).

This sequence belongs to the RecO family.

Involved in DNA repair and RecF pathway recombination. The protein is DNA repair protein RecO of Nitrosococcus oceani (strain ATCC 19707 / BCRC 17464 / JCM 30415 / NCIMB 11848 / C-107).